Here is an 82-residue protein sequence, read N- to C-terminus: uncharacterized protein (82 aa).

The disordered stretch occupies residues 60–82 (YKRRRPDHMMKRNSPSYTGDHKT).

This is an uncharacterized protein from Saccharomyces cerevisiae (strain ATCC 204508 / S288c) (Baker's yeast).